Consider the following 300-residue polypeptide: NADH-ubiquinone oxidoreductase chain 2 (300 aa).

Transmembrane regions (helical) follow at residues 4–24, 29–49, 58–78, 87–107, 122–142, 165–185, 201–221, 231–251, and 267–287; these read FFCI…NVLV, FLLM…YVGI, SLGL…IVMM, FWVF…FLTF, FSAF…LFVL, FLSV…MAFL, VLLV…IFVL, FLLF…LWLV, and VLFF…FSKI.

It belongs to the complex I subunit 2 family.

It localises to the mitochondrion inner membrane. The enzyme catalyses a ubiquinone + NADH + 5 H(+)(in) = a ubiquinol + NAD(+) + 4 H(+)(out). Core subunit of the mitochondrial membrane respiratory chain NADH dehydrogenase (Complex I) that is believed to belong to the minimal assembly required for catalysis. Complex I functions in the transfer of electrons from NADH to the respiratory chain. The immediate electron acceptor for the enzyme is believed to be ubiquinone. This chain is NADH-ubiquinone oxidoreductase chain 2 (ND2), found in Ascaris suum (Pig roundworm).